A 95-amino-acid polypeptide reads, in one-letter code: Aspartyl/glutamyl-tRNA(Asn/Gln) amidotransferase subunit C (95 aa).

Belongs to the GatC family. In terms of assembly, heterotrimer of A, B and C subunits.

The enzyme catalyses L-glutamyl-tRNA(Gln) + L-glutamine + ATP + H2O = L-glutaminyl-tRNA(Gln) + L-glutamate + ADP + phosphate + H(+). It carries out the reaction L-aspartyl-tRNA(Asn) + L-glutamine + ATP + H2O = L-asparaginyl-tRNA(Asn) + L-glutamate + ADP + phosphate + 2 H(+). Functionally, allows the formation of correctly charged Asn-tRNA(Asn) or Gln-tRNA(Gln) through the transamidation of misacylated Asp-tRNA(Asn) or Glu-tRNA(Gln) in organisms which lack either or both of asparaginyl-tRNA or glutaminyl-tRNA synthetases. The reaction takes place in the presence of glutamine and ATP through an activated phospho-Asp-tRNA(Asn) or phospho-Glu-tRNA(Gln). This is Aspartyl/glutamyl-tRNA(Asn/Gln) amidotransferase subunit C from Rhizobium leguminosarum bv. trifolii (strain WSM2304).